Reading from the N-terminus, the 200-residue chain is Probable UbiX-like flavin prenyltransferase (200 aa).

FMN is bound by residues 9–11, Ser36, 87–90, and Arg122; these read GAT and SMKT.

The protein belongs to the UbiX/PAD1 family. YclB subfamily. In terms of assembly, homododecamer.

It catalyses the reaction dimethylallyl phosphate + FMNH2 = prenylated FMNH2 + phosphate. Involved in the non-oxidative decarboxylation and detoxification of phenolic derivatives under both aerobic and anaerobic conditions. Flavin prenyltransferase that catalyzes the synthesis of the prenylated FMN cofactor (prenyl-FMN) for phenolic acid decarboxylase. In Streptomyces sp. (strain D7), this protein is Probable UbiX-like flavin prenyltransferase.